Here is a 215-residue protein sequence, read N- to C-terminus: MKYQLTALEARVIGCLLEKQVTTPEQYPLSVNGVVTACNQKTNREPVMNLSESEVQEQLDNLVKRHYLRTVSGFGNRVTKYEQRFCNSEFGDLKLSAAEVALITTLLLRGAQTPGELRSRAARMYEFSDMAELESTLEQLANREDGPFVVRLAREPGKRESRYMHLFSGEVEDQPAVTDMSNAVDGDLQARVEALEIEVAELKQRLDSLLAHLGD.

K80 is modified (N6-acetyllysine).

The protein belongs to the UPF0502 family.

The sequence is that of UPF0502 protein YceH from Shigella boydii serotype 4 (strain Sb227).